A 211-amino-acid chain; its full sequence is Endonuclease III (211 aa).

In terms of domain architecture, HhH spans 111-130 (AHALESLPGVGHKTANVVLN). The [4Fe-4S] cluster site is built by C190, C197, C200, and C206.

The protein belongs to the Nth/MutY family. Requires [4Fe-4S] cluster as cofactor.

It carries out the reaction 2'-deoxyribonucleotide-(2'-deoxyribose 5'-phosphate)-2'-deoxyribonucleotide-DNA = a 3'-end 2'-deoxyribonucleotide-(2,3-dehydro-2,3-deoxyribose 5'-phosphate)-DNA + a 5'-end 5'-phospho-2'-deoxyribonucleoside-DNA + H(+). Functionally, DNA repair enzyme that has both DNA N-glycosylase activity and AP-lyase activity. The DNA N-glycosylase activity releases various damaged pyrimidines from DNA by cleaving the N-glycosidic bond, leaving an AP (apurinic/apyrimidinic) site. The AP-lyase activity cleaves the phosphodiester bond 3' to the AP site by a beta-elimination, leaving a 3'-terminal unsaturated sugar and a product with a terminal 5'-phosphate. This chain is Endonuclease III, found in Treponema pallidum (strain Nichols).